Consider the following 117-residue polypeptide: UPF0145 protein CV_4322 (117 aa).

The protein belongs to the UPF0145 family.

The polypeptide is UPF0145 protein CV_4322 (Chromobacterium violaceum (strain ATCC 12472 / DSM 30191 / JCM 1249 / CCUG 213 / NBRC 12614 / NCIMB 9131 / NCTC 9757 / MK)).